A 292-amino-acid chain; its full sequence is Probable alpha-L-glutamate ligase (292 aa).

In terms of domain architecture, ATP-grasp spans 104–287 (HQLLAAKGID…VATRIIEHVE (184 aa)). Residues Lys-141, 178 to 179 (EF), Asp-187, and 211 to 213 (RSN) each bind ATP. Positions 248, 260, and 262 each coordinate Mg(2+). Mn(2+) is bound by residues Asp-248, Glu-260, and Asn-262.

This sequence belongs to the RimK family. Mg(2+) is required as a cofactor. It depends on Mn(2+) as a cofactor.

The chain is Probable alpha-L-glutamate ligase from Stenotrophomonas maltophilia (strain R551-3).